The following is a 362-amino-acid chain: P2Y purinoceptor 1 (362 aa).

Residues M1 to F40 are Extracellular-facing. Residues N11 and N26 are each glycosylated (N-linked (GlcNAc...) asparagine). 2 disulfide bridges follow: C31–C285 and C113–C191. ADP is bound at residue K35. Residues Y41 to W63 form a helical membrane-spanning segment. The Cytoplasmic segment spans residues M64–S76. The chain crosses the membrane as a helical span at residues V77–F98. The Extracellular segment spans residues Y99–K114. An N-linked (GlcNAc...) asparagine glycan is attached at N102. Residues L115–V136 traverse the membrane as a helical segment. The Cytoplasmic segment spans residues H137–K155. Residues N156 to F177 traverse the membrane as a helical segment. Residues Y178 to Y203 lie on the Extracellular side of the membrane. N186 is a glycosylation site (N-linked (GlcNAc...) asparagine). Position 192–194 (Y192–T194) interacts with ADP. A helical membrane pass occupies residues F204 to Y226. The Cytoplasmic segment spans residues G227–Y249. Residues L250 to L273 traverse the membrane as a helical segment. Residues N272–R276, Y292–Y295, and R299 each bind ADP. At R274 to Y292 the chain is on the extracellular side. The chain crosses the membrane as a helical span at residues A293–F314. Over L315–L362 the chain is Cytoplasmic.

This sequence belongs to the G-protein coupled receptor 1 family. As to expression, brain, spinal cord, gastrointestinal tract, spleen and leg muscle. Is not detected in the heart, liver, stomach, lung and kidney.

Its subcellular location is the cell membrane. Receptor for extracellular adenine nucleotides such as ADP. In platelets, binding to ADP leads to mobilization of intracellular calcium ions via activation of phospholipase C, a change in platelet shape, and ultimately platelet aggregation. This Gallus gallus (Chicken) protein is P2Y purinoceptor 1 (P2RY1).